We begin with the raw amino-acid sequence, 1730 residues long: SH3 and multiple ankyrin repeat domains protein 3 (1730 aa).

Residues 1–75 (MDGPGASAVV…KFLDEERLLQ (75 aa)) form an intramolecular interaction with the ANK repeats region. Tyrosine 122 is subject to Phosphotyrosine. ANK repeat units lie at residues 148 to 178 (SGECPLSLAAQLDNATDLLKVLRNGGAHLDF), 182 to 211 (DGLTAVHCATRQRNAGALTTLLDLGASPDY), 215 to 245 (RGLTPLYHSALGGGDALCCELLLHDHAQLGT), 249 to 278 (NGWQEIHQACRFGHVQHLEHLLFYGANMGA), 282 to 311 (SGNTALHICALYNQESCARVLLFRGANKDV), and 315 to 345 (NSQTAFQVAIIAGNFELAEVIKTHKDSDVVP). Residues 354 to 466 (KRRRLAGPSG…PPPRGPKRKL (113 aa)) are disordered. 4 positions are modified to phosphoserine: serine 373, serine 375, serine 387, and serine 394. The segment covering 404-415 (LQEEKDRDRDGE) has biased composition (basic and acidic residues). Residues 444 to 460 (APGPGPASPAPPAPPPR) are compositionally biased toward pro residues. The 60-residue stretch at 470–529 (VPGRKFIAVKAHSPQGEGEIPLHRGEAVKVLSIGEGGFWEGTVKGRTGWFPADCVEEVQM) folds into the SH3 domain. Serine 482 bears the Phosphoserine mark. A Phosphotyrosine modification is found at tyrosine 555. A PDZ domain is found at 570 to 664 (VAILQKRDHE…RLVMKVVSVT (95 aa)). The tract at residues 664–688 (TRKPEEDGARRRAPPPPKRAPSTTL) is disordered. Positions 677–684 (PPPPKRAP) are required for interaction with ABI1. Phosphoserine occurs at positions 694, 781, 790, and 801. Disordered regions lie at residues 760-1460 (QGLP…AAGP) and 1475-1524 (GDPV…SLLD). The span at 812–844 (IPPPPQTAPPPPPAPYYFDSGPPPTFSPPPPPG) shows a compositional bias: pro residues. The span at 857–869 (GLEARLGAGAAGL) shows a compositional bias: low complexity. Phosphoserine is present on residues serine 890 and serine 897. Threonine 912 is modified (phosphothreonine). Tyrosine 930 carries the post-translational modification Phosphotyrosine. Arginine 965 is modified (asymmetric dimethylarginine). Serine 995 carries the phosphoserine modification. Basic and acidic residues predominate over residues 1016-1026 (VKERRLEERRR). Over residues 1078 to 1092 (LKPLVGGPSLGPSGS) the composition is skewed to low complexity. Polar residues predominate over residues 1122–1131 (SQTPSRSPTP). Residue threonine 1130 is modified to Phosphothreonine. Serine 1134, serine 1159, serine 1163, and serine 1166 each carry phosphoserine. A compositionally biased stretch (basic and acidic residues) spans 1174–1194 (ARREAEKPPREERKSPEDKKS). A Phosphothreonine modification is found at threonine 1234. The segment covering 1235-1250 (PELAPAPMQAAAVAEP) has biased composition (low complexity). Pro residues-rich tracts occupy residues 1251–1261 (MPSPRAQPPGS) and 1321–1333 (TPPPGPGPLPTTV). Serine 1253 bears the Phosphoserine mark. Residues 1360 to 1370 (ADTRSSSDPHL) are compositionally biased toward basic and acidic residues. The span at 1371–1392 (ETTSTISTVSSMSTLSSESGEL) shows a compositional bias: low complexity. The SH3-binding signature appears at 1410-1416 (PPVPPKP). Serine 1420 is modified (phosphoserine). Residues 1494-1514 (ISELSSRLQQLNKDTRSLGEE) are a coiled coil. Residues 1495-1505 (SELSSRLQQLN) are compositionally biased toward polar residues. A phosphoserine mark is found at serine 1510, serine 1521, serine 1529, and serine 1539. Disordered regions lie at residues 1546-1584 (ISAQRSPGGPGGGASYSVRPSGRYPVARRAPSPVKPASL) and 1627-1663 (VRSVSARSRSPSPSPLPSPSPGSGPSAGPRRPFQQKP). Positions 1627 to 1637 (VRSVSARSRSP) are enriched in low complexity. Residues serine 1634, serine 1636, and serine 1638 each carry the phosphoserine modification. Positions 1638–1648 (SPSPLPSPSPG) are enriched in pro residues. Positions 1649–1658 (SGPSAGPRRP) are enriched in low complexity. The region spanning 1667–1730 (WSKFDVGDWL…ERALRQLDGS (64 aa)) is the SAM domain.

Belongs to the SHANK family. In terms of assembly, may homomultimerize via its SAM domain. Interacts with BAIAP2, DBNL and SLC17A7/VGLUT1. Interacts with DLGAP1/GKAP, GRM1/MGLUR1, GRM5/MGLUR5 and LZTS3 C-termini via its PDZ domain. Interacts with ABI1, HOMER1, HOMER2, HOMER3 and CTTN/cortactin SH3 domain. Is part of a complex with DLG4/PSD-95 and DLGAP1/GKAP. Interacts (via PDZ domain) with the GRIA1 subunit of the AMPA receptor (via PDZ-binding motif). Interacts with WASF1 and CYFIP2; the interactions mediate the association of SHANK3 with the WAVE1 complex. Interacts with ARPC2; the interaction probably mediates the association of SHANK3 with the Arp2/3 complex. Interacts (via ANK repeats) with SHARPIN and SPTAN1. Interacts (via PDZ domain) with ARHGAP44 (probably via PDZ-binding motif); the interaction takes place in dendritic spines and promotes GRIA1 exocytosis. Interacts with CAMK2A. Interacts with DIP2A. Interacts with ADGRL3. In terms of tissue distribution, in brain, highly expressed in striatum, thalamus, hippocampus and granule cells of the cerebellum.

It is found in the cytoplasm. Its subcellular location is the synapse. The protein localises to the postsynaptic density. It localises to the cell projection. The protein resides in the dendritic spine. Major scaffold postsynaptic density protein which interacts with multiple proteins and complexes to orchestrate the dendritic spine and synapse formation, maturation and maintenance. Interconnects receptors of the postsynaptic membrane including NMDA-type and metabotropic glutamate receptors via complexes with GKAP/PSD-95 and HOMER, respectively, and the actin-based cytoskeleton. Plays a role in the structural and functional organization of the dendritic spine and synaptic junction through the interaction with Arp2/3 and WAVE1 complex as well as the promotion of the F-actin clusters. By way of this control of actin dynamics, participates in the regulation of developing neurons growth cone motility and the NMDA receptor-signaling. Also modulates GRIA1 exocytosis and GRM5/MGLUR5 expression and signaling to control the AMPA and metabotropic glutamate receptor-mediated synaptic transmission and plasticity. May be required at an early stage of synapse formation and be inhibited by IGF1 to promote synapse maturation. The polypeptide is SH3 and multiple ankyrin repeat domains protein 3 (Shank3) (Mus musculus (Mouse)).